The chain runs to 131 residues: Glycine cleavage system H protein (131 aa).

The Lipoyl-binding domain maps to 24-106; that stretch reads TVRVGITDYA…YGEGWLVELQ (83 aa). The residue at position 65 (lysine 65) is an N6-lipoyllysine.

It belongs to the GcvH family. In terms of assembly, the glycine cleavage system is composed of four proteins: P, T, L and H. (R)-lipoate is required as a cofactor.

In terms of biological role, the glycine cleavage system catalyzes the degradation of glycine. The H protein shuttles the methylamine group of glycine from the P protein to the T protein. The chain is Glycine cleavage system H protein from Mycolicibacterium gilvum (strain PYR-GCK) (Mycobacterium gilvum (strain PYR-GCK)).